The chain runs to 591 residues: Lysyl oxidase homolog 1 (591 aa).

Positions methionine 1 to glycine 22 are cleaved as a signal peptide. Positions glutamine 23–arginine 91 are excised as a propeptide. Disordered stretches follow at residues alanine 77–valine 107 and glutamate 233–valine 373. The span at proline 82–glutamine 92 shows a compositional bias: basic residues. The segment covering asparagine 298–proline 313 has biased composition (gly residues). Positions proline 319–leucine 386 are interaction with FBLN5. The segment at proline 387 to serine 591 is lysyl-oxidase like. Cystine bridges form between cysteine 412-cysteine 418, cysteine 465-cysteine 514, cysteine 498-cysteine 504, cysteine 525-cysteine 535, and cysteine 572-cysteine 586. Cu cation is bound by residues histidine 466, histidine 468, and histidine 470. The segment at residues lysine 494–tyrosine 529 is a cross-link (lysine tyrosylquinone (Lys-Tyr)). Residue tyrosine 529 is modified to 2',4',5'-topaquinone.

Belongs to the lysyl oxidase family. Interacts (via propeptide) with EFEMP2. Interacts with FBLN5. Requires Cu cation as cofactor. Lysine tyrosylquinone residue is required as a cofactor. Post-translationally, the lysine tyrosylquinone cross-link (LTQ) is generated by condensation of the epsilon-amino group of a lysine with a topaquinone produced by oxidation of tyrosine. In terms of processing, proteolytic processing by a furin-like protease causes removal of N-terminal propeptide resulting in an enzyme largely inactive, but further proteolytic processing by BMP1 results in enzyme activation.

It localises to the secreted. Its subcellular location is the extracellular space. It is found in the extracellular matrix. The enzyme catalyses L-lysyl-[protein] + O2 + H2O = (S)-2-amino-6-oxohexanoyl-[protein] + H2O2 + NH4(+). Its function is as follows. Catalyzes the oxidative deamination of lysine and hydroxylysine residues in collagen and elastin, resulting in the formation of covalent cross-linkages, and the stabilization of collagen and elastin fibers. Essential for the elastic fiber homeostasis and for their maintenance at adult age. The chain is Lysyl oxidase homolog 1 (LOXL1) from Bos taurus (Bovine).